A 371-amino-acid polypeptide reads, in one-letter code: Germination protease (371 aa).

Positions 1–16 (MEKQKLDLSAYQIRTD) are excised as a propeptide.

This sequence belongs to the peptidase A25 family. Homotetramer. In terms of processing, autoproteolytically processed. The inactive tetrameric zymogen termed p46 autoprocesses to a smaller form termed p41, which is active only during spore germination.

The enzyme catalyses Endopeptidase action with P4 Glu or Asp, P1 preferably Glu &gt; Asp, P1' hydrophobic and P2' Ala.. Initiates the rapid degradation of small, acid-soluble proteins during spore germination. The protein is Germination protease of Bacillus pumilus (strain SAFR-032).